Here is an 829-residue protein sequence, read N- to C-terminus: Genome polyprotein (829 aa).

Ser2 carries the post-translational modification N-acetylserine; by host. An interaction with STAT1 region spans residues 2-23 (STNPKPQRKTKRNTNRRPQDVK). Residues 2–58 (STNPKPQRKTKRNTNRRPQDVKFPGGGQIVGGVYLLPRRGPRLGVRATRKTSERSQP) are interaction with EIF2AK2/PKR. The interval 2–59 (STNPKPQRKTKRNTNRRPQDVKFPGGGQIVGGVYLLPRRGPRLGVRATRKTSERSQPR) is interaction with DDX3X. Residues 2–75 (STNPKPQRKT…PKARRPKGRN (74 aa)) form a disordered region. Residues 2–168 (STNPKPQRKT…EDGVNYATGN (167 aa)) are Cytoplasmic-facing. Short sequence motifs (nuclear localization signal) lie at residues 5 to 13 (PKPQRKTKR) and 38 to 43 (PRRGPR). Over residues 7-16 (PQRKTKRNTN) the composition is skewed to basic residues. A compositionally biased stretch (low complexity) spans 32–47 (GGVYLLPRRGPRLGVR). Ser53 is modified (phosphoserine; by host). Short sequence motifs (nuclear localization signal) lie at residues 58–64 (PRGRRQP) and 66–71 (PKARRP). Residues 58 to 73 (PRGRRQPIPKARRPKG) are compositionally biased toward basic residues. Phosphoserine; by host is present on Ser99. Positions 112–152 (PRRRSRNLGKVIDTLTCGFVDLMGYIPLVGAPLRGAARALA) are important for endoplasmic reticulum and mitochondrial localization. A Phosphoserine; by host PKA modification is found at Ser116. The interval 122-173 (VIDTLTCGFVDLMGYIPLVGAPLRGAARALAHGVRVLEDGVNYATGNLPGCS) is interaction with APOA2. The interval 164–167 (YATG) is important for lipid droplets localization. Residues 169–189 (LPGCSFSIFLLALLSCLTVPA) form a helical membrane-spanning segment. A propeptide spans 178 to 191 (LLALLSCLTVPASA) (ER anchor for the core protein, removed in mature form by host signal peptidase). The Lumenal portion of the chain corresponds to 190–358 (SAYQVRNSTG…AGAHWGVLAG (169 aa)). Residues Asn196, Asn209, and Asn234 are each glycosylated (N-linked (GlcNAc...) asparagine; by host). The segment at 265–296 (LVGSATLCSALYVGDLCGSVFLVGQLFTFSPR) is important for fusion. Asn305 carries an N-linked (GlcNAc...) asparagine; by host glycan. Residues 359-379 (MAYFSMVGNWAKVLAVLLLFA) form a helical membrane-spanning segment. Residues 380 to 725 (GVDAETHVTG…WEYVVLLFLL (346 aa)) are Lumenal-facing. Positions 385–411 (THVTGGAAARSTLQLAGLFQPGAKQNV) are HVR1. N-linked (GlcNAc...) (high mannose) asparagine; by host glycans are attached at residues Asn417, Asn423, Asn430, and Asn448. Disulfide bonds link Cys429-Cys552, Cys452-Cys459, Cys486-Cys494, and Cys503-Cys508. The tract at residues 474 to 479 (YAGGGG) is HVR2. A CD81-binding 1 region spans residues 480-493 (PDHRPYCWHYPPKP). Asn540 is a glycosylation site (N-linked (GlcNAc...) asparagine; by host). Residues 544-551 (PPLGNWFG) are CD81-binding 2. A glycan (N-linked (GlcNAc...) (high mannose) asparagine; by host) is linked at Asn556. Cys564 and Cys569 are oxidised to a cystine. Asn576 carries N-linked (GlcNAc...) (high mannose) asparagine; by host glycosylation. Disulfide bonds link Cys581–Cys585, Cys597–Cys620, and Cys607–Cys644. 2 N-linked (GlcNAc...) (high mannose) asparagine; by host glycosylation sites follow: Asn623 and Asn645. Cys652 and Cys677 are joined by a disulfide. Residues 660-671 (SELSPLLLSTTQ) are PKR/eIF2-alpha phosphorylation homology domain (PePHD). A helical membrane pass occupies residues 726 to 746 (LADARVCSCLWMMLLISQAEA). The Lumenal portion of the chain corresponds to 747 to 757 (ALENLVVLNAA). A helical transmembrane segment spans residues 758-778 (SLAGTHGLVSFLVFFCFAWFL). Residues 779–781 (RGK) are Cytoplasmic-facing. Residues 782–803 (WVPGAVYALYGMWPLLLLLLAL) form a helical membrane-spanning segment. The Lumenal portion of the chain corresponds to 804–813 (PQRAYALDTE). Residues 814-829 (VAASCGGVVLVGLMAL) form a helical membrane-spanning segment.

Belongs to the hepacivirus polyprotein family. Homooligomer. Interacts with E1 (via C-terminus). Interacts with the non-structural protein 5A. Interacts (via N-terminus) with host STAT1 (via SH2 domain); this interaction results in decreased STAT1 phosphorylation and ubiquitin-mediated proteasome-dependent STAT1 degradation, leading to decreased IFN-stimulated gene transcription. Interacts with host STAT3; this interaction constitutively activates STAT3. Interacts with host LTBR receptor. Interacts with host TNFRSF1A receptor and possibly induces apoptosis. Interacts with host HNRPK. Interacts with host YWHAE. Interacts with host UBE3A/E6AP. Interacts with host DDX3X. Interacts with host APOA2. Interacts with host RXRA protein. Interacts with host SP110 isoform 3/Sp110b; this interaction sequesters the transcriptional corepressor SP110 away from the nucleus. Interacts with host CREB3 nuclear transcription protein; this interaction triggers cell transformation. Interacts with host ACY3. Interacts with host C1QR1. Interacts with host RBM24; this interaction, which enhances the interaction of the mature core protein with 5'-UTR, may inhibit viral translation and favor replication. Interacts with host EIF2AK2/PKR; this interaction induces the autophosphorylation of EIF2AK2. Part of the viral assembly initiation complex composed of NS2, E1, E2, NS3, NS4A, NS5A and the mature core protein. In terms of assembly, forms a heterodimer with envelope glycoprotein E2. Interacts with mature core protein. Interacts with protease NS2. The heterodimer E1/E2 interacts with host CLDN1; this interaction plays a role in viral entry into host cell. Interacts with host SPSB2 (via C-terminus). Part of the viral assembly initiation complex composed of NS2, E1, E2, NS3, NS4A, NS5A and the mature core protein. As to quaternary structure, forms a heterodimer with envelope glycoprotein E1. Interacts with host CD81 and SCARB1 receptors; these interactions play a role in viral entry into host cell. Interacts with host EIF2AK2/PKR; this interaction inhibits EIF2AK2 and probably allows the virus to evade the innate immune response. Interacts with host CD209/DC-SIGN and CLEC4M/DC-SIGNR. Interact with host SPCS1; this interaction is essential for viral particle assembly. Interacts with protease NS2. The heterodimer E1/E2 interacts with host CLDN1; this interaction plays a role in viral entry into host cell. Part of the viral assembly initiation complex composed of NS2, E1, E2, NS3, NS4A, NS5A and the mature core protein. Homohexamer. Homoheptamer. Interacts with protease NS2. In terms of assembly, homodimer. Interacts with host SPCS1; this interaction is essential for viral particle assembly. Interacts with envelope glycoprotein E1. Interacts with envelope glycoprotein E2. Interacts with viroporin p7. Interacts with serine protease/helicase NS3. Part of the replication complex composed of NS2, NS3, NS4A, NS4B, NS5A and the RNA-directed RNA polymerase embedded in an ER-derived membranous web. Part of the viral assembly initiation complex composed of NS2, E1, E2, NS3, NS4A, NS5A and the mature core protein. The cofactor is Zn(2+). In terms of processing, specific enzymatic cleavages in vivo yield mature proteins. The structural proteins, core, E1, E2 and p7 are produced by proteolytic processing by host signal peptidases. The core protein precursor is synthesized as a 23 kDa, which is retained in the ER membrane through the hydrophobic signal peptide. Cleavage by the signal peptidase releases the 21 kDa mature core protein. The cleavage of the core protein precursor occurs between aminoacids 176 and 188 but the exact cleavage site is not known. Some degraded forms of the core protein appear as well during the course of infection. The other proteins (p7, NS2, NS3, NS4A, NS4B, NS5A and NS5B) are cleaved by the viral proteases. Autoprocessing between NS2 and NS3 is mediated by the NS2 cysteine protease catalytic domain and regulated by the NS3 N-terminal domain. Phosphorylated by host PKC and PKA. Post-translationally, ubiquitinated; mediated by UBE3A and leading to core protein subsequent proteasomal degradation. In terms of processing, highly N-glycosylated. Palmitoylation is required for NS2/3 autoprocessing and E2 recruitment to membranes.

The protein resides in the host endoplasmic reticulum membrane. Its subcellular location is the host mitochondrion membrane. It localises to the virion. It is found in the host cytoplasm. The protein localises to the host nucleus. The protein resides in the host lipid droplet. Its subcellular location is the virion membrane. It localises to the host mitochondrion. It is found in the host cell membrane. Its activity is regulated as follows. Inhibited by the antiviral drug hexamethylene amiloride. Inhibition by amantadine appears to be genotype-dependent. Also inhibited by long-alkyl-chain iminosugar derivatives. Functionally, packages viral RNA to form a viral nucleocapsid, and promotes virion budding. Participates in the viral particle production as a result of its interaction with the non-structural protein 5A. Binds RNA and may function as a RNA chaperone to induce the RNA structural rearrangements taking place during virus replication. Modulates viral translation initiation by interacting with viral IRES and 40S ribosomal subunit. Affects various cell signaling pathways, host immunity and lipid metabolism. Prevents the establishment of cellular antiviral state by blocking the interferon-alpha/beta (IFN-alpha/beta) and IFN-gamma signaling pathways and by blocking the formation of phosphorylated STAT1 and promoting ubiquitin-mediated proteasome-dependent degradation of STAT1. Activates STAT3 leading to cellular transformation. Regulates the activity of cellular genes, including c-myc and c-fos. May repress the promoter of p53, and sequester CREB3 and SP110 isoform 3/Sp110b in the cytoplasm. Represses cell cycle negative regulating factor CDKN1A, thereby interrupting an important check point of normal cell cycle regulation. Targets transcription factors involved in the regulation of inflammatory responses and in the immune response: suppresses TNF-induced NF-kappa-B activation, and activates AP-1. Binds to dendritic cells (DCs) via C1QR1, resulting in down-regulation of T-lymphocytes proliferation. Alters lipid metabolism by interacting with hepatocellular proteins involved in lipid accumulation and storage. Induces up-regulation of FAS promoter activity, and thereby contributes to the increased triglyceride accumulation in hepatocytes (steatosis). Its function is as follows. Forms a heterodimer with envelope glycoprotein E2, which mediates virus attachment to the host cell, virion internalization through clathrin-dependent endocytosis and fusion with host membrane. Fusion with the host cell is most likely mediated by both E1 and E2, through conformational rearrangements of the heterodimer required for fusion rather than a classical class II fusion mechanism. E1/E2 heterodimer binds host apolipoproteins such as APOB and ApoE thereby forming a lipo-viro-particle (LVP). APOE associated to the LVP allows the initial virus attachment to cell surface receptors such as the heparan sulfate proteoglycans (HSPGs), syndecan-1 (SDC1), syndecan-1 (SDC2), the low-density lipoprotein receptor (LDLR) and scavenger receptor class B type I (SCARB1). The cholesterol transfer activity of SCARB1 allows E2 exposure and binding of E2 to SCARB1 and the tetraspanin CD81. E1/E2 heterodimer binding on CD81 activates the epithelial growth factor receptor (EGFR) signaling pathway. Diffusion of the complex E1-E2-EGFR-SCARB1-CD81 to the cell lateral membrane allows further interaction with Claudin 1 (CLDN1) and occludin (OCLN) to finally trigger HCV entry. Forms a heterodimer with envelope glycoprotein E1, which mediates virus attachment to the host cell, virion internalization through clathrin-dependent endocytosis and fusion with host membrane. Fusion with the host cell is most likely mediated by both E1 and E2, through conformational rearrangements of the heterodimer required for fusion rather than a classical class II fusion mechanism. The interaction between envelope glycoprotein E2 and host apolipoprotein E/APOE allows the proper assembly, maturation and infectivity of the viral particles. This interaction is probably promoted via the up-regulation of cellular autophagy by the virus. E1/E2 heterodimer binds host apolipoproteins such as APOB and APOE thereby forming a lipo-viro-particle (LVP). APOE associated to the LVP allows the initial virus attachment to cell surface receptors such as the heparan sulfate proteoglycans (HSPGs), syndecan-1 (SDC1), syndecan-1 (SDC2), the low-density lipoprotein receptor (LDLR) and scavenger receptor class B type I (SCARB1). The cholesterol transfer activity of SCARB1 allows E2 exposure and binding of E2 to SCARB1 and the tetraspanin CD81. E1/E2 heterodimer binding on CD81 activates the epithelial growth factor receptor (EGFR) signaling pathway. Diffusion of the complex E1-E2-EGFR-SCARB1-CD81 to the cell lateral membrane allows further interaction with Claudin 1 (CLDN1) and occludin (OCLN) to finally trigger HCV entry. Inhibits host EIF2AK2/PKR activation, preventing the establishment of an antiviral state. Viral ligand for CD209/DC-SIGN and CLEC4M/DC-SIGNR, which are respectively found on dendritic cells (DCs), and on liver sinusoidal endothelial cells and macrophage-like cells of lymph node sinuses. These interactions allow the capture of circulating HCV particles by these cells and subsequent facilitated transmission to permissive cells such as hepatocytes and lymphocyte subpopulations. In terms of biological role, ion channel protein that acts as a viroporin and plays an essential role in the assembly, envelopment and secretion of viral particles. Regulates the host cell secretory pathway, which induces the intracellular retention of viral glycoproteins and favors assembly of viral particles. Creates a pore in acidic organelles and releases Ca(2+) and H(+) in the cytoplasm of infected cells, leading to a productive viral infection. High levels of cytoplasmic Ca(2+) may trigger membrane trafficking and transport of viral ER-associated proteins to viroplasms, sites of viral genome replication. This ionic imbalance induces the assembly of the inflammasome complex, which triggers the maturation of pro-IL-1beta into IL-1beta through the action of caspase-1. Targets also host mitochondria and induces mitochondrial depolarization. In addition of its role as a viroporin, acts as a lipid raft adhesion factor. Functionally, cysteine protease required for the proteolytic auto-cleavage between the non-structural proteins NS2 and NS3. The N-terminus of NS3 is required for the function of NS2 protease (active region NS2-3). Promotes the initiation of viral particle assembly by mediating the interaction between structural and non-structural proteins. This Hepatitis C virus (isolate Glasgow) (HCV) protein is Genome polyprotein.